A 233-amino-acid chain; its full sequence is 7-cyano-7-deazaguanine synthase (233 aa).

Position 8-18 (8-18 (FSGGQDSTTCL)) interacts with ATP. The Zn(2+) site is built by C188, C197, C200, and C203.

The protein belongs to the QueC family. Requires Zn(2+) as cofactor.

It catalyses the reaction 7-carboxy-7-deazaguanine + NH4(+) + ATP = 7-cyano-7-deazaguanine + ADP + phosphate + H2O + H(+). The protein operates within purine metabolism; 7-cyano-7-deazaguanine biosynthesis. Its function is as follows. Catalyzes the ATP-dependent conversion of 7-carboxy-7-deazaguanine (CDG) to 7-cyano-7-deazaguanine (preQ(0)). The polypeptide is 7-cyano-7-deazaguanine synthase (Klebsiella pneumoniae (strain 342)).